A 140-amino-acid polypeptide reads, in one-letter code: Nucleoside diphosphate kinase (140 aa).

ATP contacts are provided by lysine 9, phenylalanine 57, arginine 85, threonine 91, arginine 102, and asparagine 112. The Pros-phosphohistidine intermediate role is filled by histidine 115.

It belongs to the NDK family. In terms of assembly, homotetramer. Requires Mg(2+) as cofactor.

Its subcellular location is the cytoplasm. It carries out the reaction a 2'-deoxyribonucleoside 5'-diphosphate + ATP = a 2'-deoxyribonucleoside 5'-triphosphate + ADP. The catalysed reaction is a ribonucleoside 5'-diphosphate + ATP = a ribonucleoside 5'-triphosphate + ADP. Functionally, major role in the synthesis of nucleoside triphosphates other than ATP. The ATP gamma phosphate is transferred to the NDP beta phosphate via a ping-pong mechanism, using a phosphorylated active-site intermediate. This chain is Nucleoside diphosphate kinase, found in Chlorobium chlorochromatii (strain CaD3).